The following is a 270-amino-acid chain: Phosphatidylglycerol--prolipoprotein diacylglyceryl transferase (270 aa).

Helical transmembrane passes span I18 to A38, L55 to E75, W90 to F110, and G115 to I135. Residue R137 participates in a 1,2-diacyl-sn-glycero-3-phospho-(1'-sn-glycerol) binding. The next 3 membrane-spanning stretches (helical) occupy residues H177–L197, G205–M225, and L236–V256.

The protein belongs to the Lgt family.

It localises to the cell membrane. It carries out the reaction L-cysteinyl-[prolipoprotein] + a 1,2-diacyl-sn-glycero-3-phospho-(1'-sn-glycerol) = an S-1,2-diacyl-sn-glyceryl-L-cysteinyl-[prolipoprotein] + sn-glycerol 1-phosphate + H(+). It participates in protein modification; lipoprotein biosynthesis (diacylglyceryl transfer). Functionally, catalyzes the transfer of the diacylglyceryl group from phosphatidylglycerol to the sulfhydryl group of the N-terminal cysteine of a prolipoprotein, the first step in the formation of mature lipoproteins. The chain is Phosphatidylglycerol--prolipoprotein diacylglyceryl transferase from Geobacillus kaustophilus (strain HTA426).